The chain runs to 120 residues: Large ribosomal subunit protein bL12 (120 aa).

Over residues Lys-95 to Glu-112 the composition is skewed to basic and acidic residues. The interval Lys-95–Lys-120 is disordered.

It belongs to the bacterial ribosomal protein bL12 family. As to quaternary structure, homodimer. Part of the ribosomal stalk of the 50S ribosomal subunit. Forms a multimeric L10(L12)X complex, where L10 forms an elongated spine to which 2 to 4 L12 dimers bind in a sequential fashion. Binds GTP-bound translation factors.

Functionally, forms part of the ribosomal stalk which helps the ribosome interact with GTP-bound translation factors. Is thus essential for accurate translation. This is Large ribosomal subunit protein bL12 from Oceanobacillus iheyensis (strain DSM 14371 / CIP 107618 / JCM 11309 / KCTC 3954 / HTE831).